The chain runs to 292 residues: MAGYPPNPGSGYPYGGAGGYGAPPPPYGSSPAPSAPPYGAKPPKEGKTSSSSAPYYGGGGGYGAPPSTQPYGSGGGYGAPPSSQPYGAPYGAPPPSSAPYGAPGGYGSPFASLVPSAFPPGTDPNVVACFQAADRDGSGMIDDKELQSALSGYSQSFSLRTVHLLMYLFTNTNVRKIGPKEFTSVFYSLQNWRSIFERFDRDRSGKIDATELRDALLSLGYSVSPTVLDLLVSKFDKTGGKNKAIEYDNFIECCLTVKGLTEKFKEKDTAFSGSATFTYEAFMLTVLPFLIA.

The tract at residues 1–80 (MAGYPPNPGS…YGSGGGYGAP (80 aa)) is disordered. Gly residues predominate over residues 12–21 (YPYGGAGGYG). A compositionally biased stretch (pro residues) spans 22-40 (APPPPYGSSPAPSAPPYGA). 2 consecutive EF-hand domains span residues 121 to 156 (GTDP…YSQS) and 187 to 222 (YSLQ…LGYS). Residues Asp-134, Asp-136, Ser-138, Met-140, Glu-145, Asp-200, Asp-202, Ser-204, Lys-206, and Glu-211 each coordinate Ca(2+).

In terms of biological role, potential calcium sensor. This chain is Calcium-binding protein CBP, found in Oryza sativa subsp. japonica (Rice).